A 240-amino-acid polypeptide reads, in one-letter code: (DL)-glycerol-3-phosphatase 2 (240 aa).

Asp20 (nucleophile) is an active-site residue. The Mg(2+) site is built by Asp20, Asp22, and Asp185. Asp22 serves as the catalytic Proton donor.

It belongs to the HAD-like hydrolase superfamily. DOG/GPP family. Mg(2+) serves as cofactor. As to expression, ubiquitous with highest expression in siliques. Mainly restricted to the meristem of immature flower and vascular elements of the root, shoot, leave, siliqua and developing embryo (at the protein level).

The protein localises to the cytoplasm. The catalysed reaction is sn-glycerol 1-phosphate + H2O = glycerol + phosphate. It catalyses the reaction sn-glycerol 3-phosphate + H2O = glycerol + phosphate. Its function is as follows. Acts as a glycerol-3-phosphatase with higher stereospecificity for L-glycerol-3-phosphate than DL-glycerol-3-phosphate. The chain is (DL)-glycerol-3-phosphatase 2 (GPP2) from Arabidopsis thaliana (Mouse-ear cress).